The primary structure comprises 320 residues: Phospho-N-acetylmuramoyl-pentapeptide-transferase (320 aa).

The next 9 membrane-spanning stretches (helical) occupy residues 5 to 25, 51 to 71, 75 to 95, 121 to 141, 143 to 163, 176 to 196, 198 to 218, 241 to 261, and 300 to 320; these read FWAF…VIKF, MGGA…SVAY, IGFV…IIGG, LCAV…ILNI, FIGV…WLVG, GLLT…ALGV, NHII…FLLF, IESI…IFVI, and IDAL…LYMS.

This sequence belongs to the glycosyltransferase 4 family. MraY subfamily. Mg(2+) serves as cofactor.

Its subcellular location is the cell membrane. The enzyme catalyses UDP-N-acetyl-alpha-D-muramoyl-L-alanyl-gamma-D-glutamyl-L-lysyl-D-alanyl-D-alanine + di-trans,octa-cis-undecaprenyl phosphate = Mur2Ac(oyl-L-Ala-gamma-D-Glu-L-Lys-D-Ala-D-Ala)-di-trans,octa-cis-undecaprenyl diphosphate + UMP. The protein operates within cell wall biogenesis; peptidoglycan biosynthesis. Catalyzes the initial step of the lipid cycle reactions in the biosynthesis of the cell wall peptidoglycan: transfers peptidoglycan precursor phospho-MurNAc-pentapeptide from UDP-MurNAc-pentapeptide onto the lipid carrier undecaprenyl phosphate, yielding undecaprenyl-pyrophosphoryl-MurNAc-pentapeptide, known as lipid I. In Leuconostoc mesenteroides subsp. mesenteroides (strain ATCC 8293 / DSM 20343 / BCRC 11652 / CCM 1803 / JCM 6124 / NCDO 523 / NBRC 100496 / NCIMB 8023 / NCTC 12954 / NRRL B-1118 / 37Y), this protein is Phospho-N-acetylmuramoyl-pentapeptide-transferase.